Consider the following 537-residue polypeptide: MARDPGRVLIFDTTLRDGEQSPGASLNLDEKLAIAQQLARLRVDIIEAGFPFASPGDFDAVQTIARQVGRPDGPVICGLARATRGDIKACADAVAPAANQRIHTFLATSDIHLEHKLRKSRAEVLQIVPEMVAYARSLVDDVEFSCEDAGRSDPEFMYQVIEAAIEAGATTINIPDTVGYSTPAEFGALIAGIDAHVPNIGQAVISVHGHNDLGLAVANFLEAVKNGARQLECTINGIGERAGNASLEELVMALHVRRSYFNGYLGRAEDSSEPLTGIQTEEIYKTSRLVSNLTGMAVQPNKAIVGANAFAHESGIHQDGVLKNRLTYEIIDARTIGLTDNRISLGKLSGRSAVRARLEELGYQLDGDDLNDAFARFKELADRKREITDRDLEAIVRQNAQQIEAYYQLAGVQVSCGRDLRATATVTLRTSDGEECSQAAIGTGPVDAVCQALNGLVQVPNELVEFSVKSVTEGIDAMGEVTIRLRQDGRLYSGHAADTDVVVAAAQAFVNALNRLVSGQKHSPLHPQRAPLPAPAL.

The Pyruvate carboxyltransferase domain occupies Val8–Glu269. Asp17, His208, His210, and Asn244 together coordinate Mn(2+). Residues Gln408 to Leu537 are regulatory domain.

It belongs to the alpha-IPM synthase/homocitrate synthase family. LeuA type 1 subfamily. In terms of assembly, homodimer. Mn(2+) serves as cofactor.

The protein localises to the cytoplasm. The enzyme catalyses 3-methyl-2-oxobutanoate + acetyl-CoA + H2O = (2S)-2-isopropylmalate + CoA + H(+). It participates in amino-acid biosynthesis; L-leucine biosynthesis; L-leucine from 3-methyl-2-oxobutanoate: step 1/4. Catalyzes the condensation of the acetyl group of acetyl-CoA with 3-methyl-2-oxobutanoate (2-ketoisovalerate) to form 3-carboxy-3-hydroxy-4-methylpentanoate (2-isopropylmalate). The protein is 2-isopropylmalate synthase of Synechococcus sp. (strain RCC307).